A 168-amino-acid chain; its full sequence is RNA pyrophosphohydrolase (168 aa).

The region spanning 8-160 (PYRTCVGIAL…KRPVYERVAK (153 aa)) is the Nudix hydrolase domain. The short motif at 47–68 (GGVDPGEDAWEAAKRELYEETS) is the Nudix box element.

It belongs to the Nudix hydrolase family. RppH subfamily. A divalent metal cation is required as a cofactor.

Functionally, accelerates the degradation of transcripts by removing pyrophosphate from the 5'-end of triphosphorylated RNA, leading to a more labile monophosphorylated state that can stimulate subsequent ribonuclease cleavage. In Bradyrhizobium sp. (strain ORS 278), this protein is RNA pyrophosphohydrolase.